The chain runs to 465 residues: Protein maelstrom (465 aa).

Residues 2–69 constitute a DNA-binding region (HMG box); that stretch reads APKKHSAFMV…ADRAKRERLN (68 aa). 2 disordered regions span residues 373-394 and 419-443; these read NQSEDVLLSSSRPSVESSSYTP and SKHRGLDVSAQRERNAGAWNLPTHS. Residues 381–391 show a composition bias toward low complexity; that stretch reads SSSRPSVESSS. Residues 422–433 show a composition bias toward basic and acidic residues; it reads RGLDVSAQRERN.

It belongs to the maelstrom family.

Its subcellular location is the cytoplasm. It is found in the nucleus. Functionally, involved both in the piRNA and miRNA metabolic processes. As a component of the meiotic nuage, plays a central role during oogenesis by repressing transposable elements and preventing their mobilization, which is essential for the germline integrity. Repression of transposable elements is mediated via the piRNA metabolic process, which mediates the repression of transposable elements during meiosis by forming complexes composed of piRNAs and Piwi proteins and governs the repression of transposons. As a nuclear component, it is required for proper differentiation in the germline stem cell (GSC) lineage by repressing microRNA-7 (miR-7), thereby acting as an indirect regulator of bag-of-marbles (Bam). Acts by binding to the promoter of miR-7 gene and repressing its expression; miR-7 repression alleviates the Bam repression by miR-7, thereby allowing differentiation in the germline stem cell (GSC) lineage. In Drosophila erecta (Fruit fly), this protein is Protein maelstrom (mael).